A 168-amino-acid polypeptide reads, in one-letter code: Transcription antitermination protein NusB (168 aa).

It belongs to the NusB family.

In terms of biological role, involved in transcription antitermination. Required for transcription of ribosomal RNA (rRNA) genes. Binds specifically to the boxA antiterminator sequence of the ribosomal RNA (rrn) operons. The sequence is that of Transcription antitermination protein NusB from Bradyrhizobium sp. (strain ORS 278).